The following is an 84-amino-acid chain: Hepcidin (84 aa).

The N-terminal stretch at 1 to 24 (MALSSQIWAACLLLLLLLASLTSG) is a signal peptide. The propeptide occupies 25–54 (SVFPQQTGQLAELQPQDRAGARASWMPMFQ). 4 disulfides stabilise this stretch: Cys66-Cys82, Cys69-Cys72, Cys70-Cys78, and Cys73-Cys81.

It belongs to the hepcidin family. As to quaternary structure, interacts with SLC40A1; this interaction promotes SLC40A1 rapid ubiquitination. In terms of tissue distribution, highest expression in liver and to a lesser extent in heart and brain. Low levels in lung, tonsils, salivary gland, trachea, prostate gland, adrenal gland and thyroid gland. Secreted into the urine and blood. Expressed by hepatocytes.

The protein resides in the secreted. Its function is as follows. Liver-produced hormone that constitutes the main circulating regulator of iron absorption and distribution across tissues. Acts by promoting endocytosis and degradation of ferroportin/SLC40A1, leading to the retention of iron in iron-exporting cells and decreased flow of iron into plasma. Controls the major flows of iron into plasma: absorption of dietary iron in the intestine, recycling of iron by macrophages, which phagocytose old erythrocytes and other cells, and mobilization of stored iron from hepatocytes. Has strong antimicrobial activity against E.coli ML35P N.cinerea and weaker against S.epidermidis, S.aureus and group b streptococcus bacteria. Active against the fungus C.albicans. No activity against P.aeruginosa. The protein is Hepcidin of Homo sapiens (Human).